The sequence spans 421 residues: 2-deoxystreptamine N-acetyl-D-glucosaminyltransferase (421 aa).

This sequence belongs to the glycosyltransferase group 1 family. Glycosyltransferase 4 subfamily.

The catalysed reaction is 2-deoxystreptamine + UDP-N-acetyl-alpha-D-glucosamine = 2'-N-acetylparomamine + UDP + H(+). It participates in antibiotic biosynthesis; neomycin biosynthesis. Its function is as follows. Glycosyltransferase involved in the biosynthesis of neomycin by mediating conversion of 2-deoxystreptamine (2-DOS) to 2'-N-acetylparomamine using UDP-alpha-D-glucosamine as sugar donor. The sequence is that of 2-deoxystreptamine N-acetyl-D-glucosaminyltransferase (neoD) from Streptomyces fradiae (Streptomyces roseoflavus).